Here is a 361-residue protein sequence, read N- to C-terminus: tRNA-specific 2-thiouridylase MnmA (361 aa).

Residues 8–15 and M34 each bind ATP; that span reads GMSGGVDS. The interaction with target base in tRNA stretch occupies residues 94 to 96; sequence NPD. C99 (nucleophile) is an active-site residue. Cysteines 99 and 195 form a disulfide. G123 contacts ATP. An interaction with tRNA region spans residues 145-147; the sequence is KDQ. The active-site Cysteine persulfide intermediate is C195. Positions 307–308 are interaction with tRNA; it reads RY.

It belongs to the MnmA/TRMU family.

The protein localises to the cytoplasm. It catalyses the reaction S-sulfanyl-L-cysteinyl-[protein] + uridine(34) in tRNA + AH2 + ATP = 2-thiouridine(34) in tRNA + L-cysteinyl-[protein] + A + AMP + diphosphate + H(+). Its function is as follows. Catalyzes the 2-thiolation of uridine at the wobble position (U34) of tRNA, leading to the formation of s(2)U34. This chain is tRNA-specific 2-thiouridylase MnmA, found in Legionella pneumophila subsp. pneumophila (strain Philadelphia 1 / ATCC 33152 / DSM 7513).